A 41-amino-acid polypeptide reads, in one-letter code: Large ribosomal subunit protein bL36 (41 aa).

Belongs to the bacterial ribosomal protein bL36 family.

This Xanthobacter autotrophicus (strain ATCC BAA-1158 / Py2) protein is Large ribosomal subunit protein bL36.